Reading from the N-terminus, the 431-residue chain is ABSCISIC ACID-INSENSITIVE 5-like protein 7 (431 aa).

The segment at 1 to 29 is disordered; sequence MGTHINFNNLGGGGHPGGEGSSNQMKPTG. Gly residues predominate over residues 10 to 20; it reads LGGGGHPGGEG. S39 and S61 each carry phosphoserine. S110 bears the Phosphoserine; by CPK32 mark. The interval 133-153 is disordered; it reads DGNMEGSSGGGGESNVPPGRQ. At T155 the chain carries Phosphothreonine. Residues 319–331 are compositionally biased toward polar residues; that stretch reads SPGTSSAENNSLS. The interval 319–338 is disordered; the sequence is SPGTSSAENNSLSPVPYVLN. The Nuclear localization signal signature appears at 340 to 347; sequence GRRSNTGL. One can recognise a bZIP domain in the interval 351–414; that stretch reads IERRQRRMIK…KNELKETSKR (64 aa). Residues 353-372 are basic motif; it reads RRQRRMIKNRESAARSRARK. Residues 372-411 adopt a coiled-coil conformation; that stretch reads KQAYTLELEAEIEKLKKTNQELQKKQAEMVEMQKNELKET. The segment at 379-393 is leucine-zipper; it reads LEAEIEKLKKTNQEL.

The protein belongs to the bZIP family. ABI5 subfamily. In terms of assembly, DNA-binding heterodimer. Interacts with CPK32 and the AFP proteins AFP1, AFP2 and AFP3. Interacts with FREE1 (via C-terminus). In terms of processing, phosphorylated by CPK4 and CPK11 in vitro. Expressed in roots, leaves, flowers and immatures siliques.

The protein resides in the nucleus. Functionally, functions as a transcriptional activator in the ABA-inducible expression of LTI65/RD29B (AC Q04980). Binds specifically to the ABA-responsive element (ABRE) of the LTI65/RD29B (AC Q04980) gene promoter. Binds to the promoter of FREE1 and activates its transcription. The polypeptide is ABSCISIC ACID-INSENSITIVE 5-like protein 7 (Arabidopsis thaliana (Mouse-ear cress)).